A 765-amino-acid chain; its full sequence is LPS-assembly protein LptD (765 aa).

Residues 1–18 (MQIRYFLALSLLPQLVLA) form the signal peptide.

This sequence belongs to the LptD family. Component of the lipopolysaccharide transport and assembly complex. Interacts with LptE and LptA.

It is found in the cell outer membrane. Functionally, together with LptE, is involved in the assembly of lipopolysaccharide (LPS) at the surface of the outer membrane. The polypeptide is LPS-assembly protein LptD (Shewanella sp. (strain MR-4)).